Consider the following 468-residue polypeptide: Dimethylamine methyltransferase MtbB2 (468 aa).

A non-standard amino acid (pyrrolysine) is located at residue pyrrolysine 356.

It belongs to the dimethylamine methyltransferase family.

It catalyses the reaction Co(I)-[dimethylamine-specific corrinoid protein] + dimethylamine + H(+) = methyl-Co(III)-[dimethylamine-specific corrinoid protein] + methylamine. The protein operates within one-carbon metabolism; methanogenesis from dimethylamine. Catalyzes the transfer of a methyl group from dimethylamine to the corrinoid cofactor of MtbC. In Methanosarcina acetivorans (strain ATCC 35395 / DSM 2834 / JCM 12185 / C2A), this protein is Dimethylamine methyltransferase MtbB2 (mtbB2).